Consider the following 303-residue polypeptide: Glutathione transport system permease protein GsiD (303 aa).

Helical transmembrane passes span 40 to 60 (AMTAALFVILLIVVAIFARWI), 105 to 125 (LAAGVFAVFIGAAIGTLLGLL), 144 to 164 (LFAFPGILLAIAVVAVLGSGI), 165 to 185 (ANVIIAVAIFSIPAFARLVRG), 222 to 242 (IVVFFTMRIGTSIISAASLSF), and 266 to 286 (VIAPHVAVFPVLAIFLTVLAF). The ABC transmembrane type-1 domain occupies 101–290 (AQISLAAGVF…LTVLAFNLLG (190 aa)).

The protein belongs to the binding-protein-dependent transport system permease family. In terms of assembly, the complex is composed of two ATP-binding proteins (GsiA), two transmembrane proteins (GsiC and GsiD) and a solute-binding protein (GsiB).

The protein localises to the cell inner membrane. In terms of biological role, part of the ABC transporter complex GsiABCD involved in glutathione import. Probably responsible for the translocation of the substrate across the membrane. This Shigella dysenteriae serotype 1 (strain Sd197) protein is Glutathione transport system permease protein GsiD.